The primary structure comprises 1070 residues: DNA-directed RNA polymerase subunit beta (1070 aa).

It belongs to the RNA polymerase beta chain family. In plastids the minimal PEP RNA polymerase catalytic core is composed of four subunits: alpha, beta, beta', and beta''. When a (nuclear-encoded) sigma factor is associated with the core the holoenzyme is formed, which can initiate transcription.

It localises to the plastid. The protein localises to the chloroplast. The catalysed reaction is RNA(n) + a ribonucleoside 5'-triphosphate = RNA(n+1) + diphosphate. In terms of biological role, DNA-dependent RNA polymerase catalyzes the transcription of DNA into RNA using the four ribonucleoside triphosphates as substrates. In Solanum tuberosum (Potato), this protein is DNA-directed RNA polymerase subunit beta.